A 145-amino-acid polypeptide reads, in one-letter code: 5-hydroxymethyl-dUMP N-hydrolase (145 aa).

5-hydroxymethyl-dUMP contacts are provided by G7, I9, R10, G11, S79, G81, E85, and S109.

The protein belongs to the 2'-deoxynucleoside 5'-phosphate N-hydrolase 1 family. As to quaternary structure, monomer and homodimer.

The protein resides in the cytoplasm. The protein localises to the nucleus. The catalysed reaction is 5-hydroxymethyl-dUMP + H2O = 5-hydroxymethyluracil + 2-deoxy-D-ribose 5-phosphate. Its function is as follows. Part of a nucleotide salvage pathway that eliminates epigenetically modified 5-hydroxymethyl-dCMP (hmdCMP) in a two-step process entailing deamination to cytotoxic 5-hydroxymethyl-dUMP (hmdUMP), followed by its hydrolysis into 5-hydroxymethyluracil (hmU) and 2-deoxy-D-ribose 5-phosphate (deoxyribosephosphate). Catalyzes the second step in that pathway, the hydrolysis of the N-glycosidic bond in hmdUMP, degrading this cytotoxic nucleotide to avoid its genomic integration. The protein is 5-hydroxymethyl-dUMP N-hydrolase of Esox lucius (Northern pike).